The sequence spans 492 residues: Catalase (492 aa).

Residues H65 and N138 contribute to the active site. Y348 serves as a coordination point for heme.

Belongs to the catalase family. As to quaternary structure, homotetramer. Heme is required as a cofactor.

It localises to the cytoplasm. Its subcellular location is the cytosol. It is found in the peroxisome matrix. It catalyses the reaction 2 H2O2 = O2 + 2 H2O. In terms of biological role, catalyzes the degradation of hydrogen peroxide (H(2)O(2)) generated by peroxisomal oxidases to water and oxygen, thereby protecting cells from the toxic effects of hydrogen peroxide. In Ipomoea batatas (Sweet potato), this protein is Catalase.